The chain runs to 155 residues: 2-C-methyl-D-erythritol 2,4-cyclodiphosphate synthase (155 aa).

The a divalent metal cation site is built by D8 and H10. Residues 8–10 (DVH) and 34–35 (HS) each bind 4-CDP-2-C-methyl-D-erythritol 2-phosphate. H42 is an a divalent metal cation binding site. 4-CDP-2-C-methyl-D-erythritol 2-phosphate is bound by residues 56 to 58 (DIG), 61 to 65 (FPDSD), 132 to 135 (TTEE), F139, and R142.

Belongs to the IspF family. As to quaternary structure, homotrimer. A divalent metal cation serves as cofactor.

It catalyses the reaction 4-CDP-2-C-methyl-D-erythritol 2-phosphate = 2-C-methyl-D-erythritol 2,4-cyclic diphosphate + CMP. The protein operates within isoprenoid biosynthesis; isopentenyl diphosphate biosynthesis via DXP pathway; isopentenyl diphosphate from 1-deoxy-D-xylulose 5-phosphate: step 4/6. Functionally, involved in the biosynthesis of isopentenyl diphosphate (IPP) and dimethylallyl diphosphate (DMAPP), two major building blocks of isoprenoid compounds. Catalyzes the conversion of 4-diphosphocytidyl-2-C-methyl-D-erythritol 2-phosphate (CDP-ME2P) to 2-C-methyl-D-erythritol 2,4-cyclodiphosphate (ME-CPP) with a corresponding release of cytidine 5-monophosphate (CMP). This is 2-C-methyl-D-erythritol 2,4-cyclodiphosphate synthase from Clostridium acetobutylicum (strain ATCC 824 / DSM 792 / JCM 1419 / IAM 19013 / LMG 5710 / NBRC 13948 / NRRL B-527 / VKM B-1787 / 2291 / W).